The primary structure comprises 247 residues: Mast cell protease 2 (247 aa).

The signal sequence occupies residues 1–19 (MHLLALHLLLFLLGSRAKA). A propeptide spans 20-21 (GE) (activation peptide). Residues 22–245 (IIGGTECKPH…YRPWINKILR (224 aa)) enclose the Peptidase S1 domain. Cysteines 51 and 67 form a disulfide. H66 functions as the Charge relay system in the catalytic mechanism. The N-linked (GlcNAc...) asparagine glycan is linked to N80. Residue D110 is the Charge relay system of the active site. Disulfide bonds link C144–C209 and C175–C188. S203 functions as the Charge relay system in the catalytic mechanism.

It belongs to the peptidase S1 family. Granzyme subfamily.

This chain is Mast cell protease 2, found in Meriones unguiculatus (Mongolian jird).